The following is a 261-amino-acid chain: 3-hydroxyacyl-CoA dehydrogenase type-2 (261 aa).

The residue at position 2 (alanine 2) is an N-acetylalanine. 3 residues coordinate NAD(+): serine 20, leucine 22, and aspartate 41. Lysine 53 is modified (N6-acetyllysine; alternate). Lysine 53 carries the N6-succinyllysine; alternate modification. 2 residues coordinate NAD(+): aspartate 64 and valine 65. Lysine 69 bears the N6-acetyllysine mark. NAD(+) is bound at residue cysteine 91. N6-acetyllysine is present on residues lysine 99 and lysine 105. Serine 155 lines the substrate pocket. NAD(+) contacts are provided by tyrosine 168, lysine 172, phenylalanine 201, and threonine 203. Tyrosine 168 serves as the catalytic Proton acceptor. Position 212 is an N6-acetyllysine; alternate (lysine 212). Lysine 212 carries the post-translational modification N6-succinyllysine; alternate.

The protein belongs to the short-chain dehydrogenases/reductases (SDR) family. As to quaternary structure, homotetramer. Component of mitochondrial ribonuclease P, a complex composed of TRMT10C/MRPP1, HSD17B10/MRPP2 and PRORP/MRPP3. Interacts with TRMT10C/MRPP1; forming the MRPP1-MRPP2 subcomplex of the mitochondrial ribonuclease P complex. As to expression, ubiquitously expressed in normal tissues but is overexpressed in neurons affected in AD.

It is found in the mitochondrion. The protein localises to the mitochondrion matrix. The protein resides in the mitochondrion nucleoid. The enzyme catalyses a (3S)-3-hydroxyacyl-CoA + NAD(+) = a 3-oxoacyl-CoA + NADH + H(+). The catalysed reaction is (2S,3S)-3-hydroxy-2-methylbutanoyl-CoA + NAD(+) = 2-methyl-3-oxobutanoyl-CoA + NADH + H(+). It carries out the reaction testosterone + NAD(+) = androst-4-ene-3,17-dione + NADH + H(+). It catalyses the reaction 5alpha-androstane-3alpha,17beta-diol + NAD(+) = 17beta-hydroxy-5alpha-androstan-3-one + NADH + H(+). The enzyme catalyses 17beta-estradiol + NAD(+) = estrone + NADH + H(+). The catalysed reaction is cholate + NAD(+) = 3alpha,12alpha-dihydroxy-7-oxo-5beta-cholanate + NADH + H(+). It carries out the reaction (3S)-3-hydroxybutanoyl-CoA + NAD(+) = acetoacetyl-CoA + NADH + H(+). It catalyses the reaction (3S)-hydroxyoctanoyl-CoA + NAD(+) = 3-oxooctanoyl-CoA + NADH + H(+). The enzyme catalyses (3S)-hydroxyhexadecanoyl-CoA + NAD(+) = 3-oxohexadecanoyl-CoA + NADH + H(+). The catalysed reaction is 17beta-hydroxy-5alpha-androstan-3-one + NAD(+) = 5alpha-androstan-3,17-dione + NADH + H(+). It carries out the reaction 5alpha-pregnan-20beta-ol-3-one + NAD(+) = 5alpha-pregnane-3,20-dione + NADH + H(+). It catalyses the reaction 3alpha-hydroxy-5alpha-pregnan-20-one + NAD(+) = 5alpha-pregnane-3,20-dione + NADH + H(+). The enzyme catalyses cortisone + NAD(+) = 17alpha-hydroxypregn-4-en-3,11,20-trione-21-al + NADH + H(+). The catalysed reaction is 11-dehydrocorticosterone + NAD(+) = pregn-4-ene-3,11,20,21-tetraone + NADH + H(+). It carries out the reaction cortisol + NAD(+) = 11beta,17alpha-dihydroxypregn-4-ene-3,20,21-trione + NADH + H(+). It catalyses the reaction chenodeoxycholate + NAD(+) = 7-oxolithocholate + NADH + H(+). The enzyme catalyses ursodeoxycholate + NAD(+) = 7-oxolithocholate + NADH + H(+). The catalysed reaction is 3beta,7beta-dihydroxy-5beta-cholan-24-oate + NAD(+) = 3beta-hydroxy-7-oxo-5beta-cholan-24-oate + NADH + H(+). The protein operates within amino-acid degradation; L-isoleucine degradation. Its pathway is lipid metabolism; fatty acid beta-oxidation. It participates in steroid metabolism. It functions in the pathway lipid metabolism; bile acid biosynthesis. The phospholipase C-like activity toward cardiolipin is inhibited by amyloid-beta peptide. In terms of biological role, mitochondrial dehydrogenase involved in pathways of fatty acid, branched-chain amino acid and steroid metabolism. Acts as (S)-3-hydroxyacyl-CoA dehydrogenase in mitochondrial fatty acid beta-oxidation, a major degradation pathway of fatty acids. Catalyzes the third step in the beta-oxidation cycle, namely the reversible conversion of (S)-3-hydroxyacyl-CoA to 3-ketoacyl-CoA. Preferentially accepts straight medium- and short-chain acyl-CoA substrates with highest efficiency for (3S)-hydroxybutanoyl-CoA. Acts as 3-hydroxy-2-methylbutyryl-CoA dehydrogenase in branched-chain amino acid catabolic pathway. Catalyzes the oxidation of 3-hydroxy-2-methylbutanoyl-CoA into 2-methyl-3-oxobutanoyl-CoA, a step in isoleucine degradation pathway. Has hydroxysteroid dehydrogenase activity toward steroid hormones and bile acids. Catalyzes the oxidation of 3alpha-, 17beta-, 20beta- and 21-hydroxysteroids and 7alpha- and 7beta-hydroxy bile acids. Oxidizes allopregnanolone/brexanolone at the 3alpha-hydroxyl group, which is known to be critical for the activation of gamma-aminobutyric acid receptors (GABAARs) chloride channel. Has phospholipase C-like activity toward cardiolipin and its oxidized species. Likely oxidizes the 2'-hydroxyl in the head group of cardiolipin to form a ketone intermediate that undergoes nucleophilic attack by water and fragments into diacylglycerol, dihydroxyacetone and orthophosphate. Has higher affinity for cardiolipin with oxidized fatty acids and may degrade these species during the oxidative stress response to protect cells from apoptosis. By interacting with intracellular amyloid-beta, it may contribute to the neuronal dysfunction associated with Alzheimer disease (AD). Essential for structural and functional integrity of mitochondria. Functionally, in addition to mitochondrial dehydrogenase activity, moonlights as a component of mitochondrial ribonuclease P, a complex that cleaves tRNA molecules in their 5'-ends. Together with TRMT10C/MRPP1, forms a subcomplex of the mitochondrial ribonuclease P, named MRPP1-MRPP2 subcomplex, which displays functions that are independent of the ribonuclease P activity. The MRPP1-MRPP2 subcomplex catalyzes the formation of N(1)-methylguanine and N(1)-methyladenine at position 9 (m1G9 and m1A9, respectively) in tRNAs; HSD17B10/MRPP2 acting as a non-catalytic subunit. The MRPP1-MRPP2 subcomplex also acts as a tRNA maturation platform: following 5'-end cleavage by the mitochondrial ribonuclease P complex, the MRPP1-MRPP2 subcomplex enhances the efficiency of 3'-processing catalyzed by ELAC2, retains the tRNA product after ELAC2 processing and presents the nascent tRNA to the mitochondrial CCA tRNA nucleotidyltransferase TRNT1 enzyme. Associates with mitochondrial DNA complexes at the nucleoids to initiate RNA processing and ribosome assembly. The polypeptide is 3-hydroxyacyl-CoA dehydrogenase type-2 (HSD17B10) (Homo sapiens (Human)).